Reading from the N-terminus, the 442-residue chain is MLILKNVTAVQLHPAKVQEGVDIAIENDVIVAIGDALTQRYPDASFKEMHGRIVMPGIVCSHNHFYSGLSRGIMANIAPCPDFISTLKNLWWRLDRALDEESLYYSGLICSLEAIKSGCTSVIDHHASPAYIGGSLSTLRDAFLKVGLRAMTCFETTDRNNGIKELQEGVEENIRFARLIDEAKKATSEPYLVEAHIGAHAPFTVPDAGLEMLREAVKATGRGLHIHAAEDLYDVSYSHHWYGKDLLARLAQFDLIDSKTLVAHGLYLSKDDITLLNQRDAFLVHNARSNMNNHVGYNHHLSDIRNLALGTDGIGSDMFEEMKFAFFKHRDAGGPLWPDSFAKALTNGNELMSRNFGAKFGLLEAGYKADLTICDYNSPTPLLADNIAGHIAFGMGSGSVHSVMVNGVMVYEDRQFNFDCDSIYAQARKAAASMWRRMDALA.

Residues His62, His64, His227, and Asp312 each contribute to the Zn(2+) site.

It belongs to the metallo-dependent hydrolases superfamily. ATZ/TRZ family.

This is Putative aminohydrolase SsnA (ssnA) from Escherichia coli (strain K12).